Here is an 865-residue protein sequence, read N- to C-terminus: Envelope glycoprotein gp160 (865 aa).

A signal peptide spans 1–20 (MRYTIITLGIIVIGIGIVLS). Residues 21 to 705 (KQWITVFYGI…SKWLNILKMG (685 aa)) are Extracellular-facing. N-linked (GlcNAc...) asparagine; by host glycosylation occurs at asparagine 35. Cysteine 42 and cysteine 55 are oxidised to a cystine. N-linked (GlcNAc...) asparagine; by host glycosylation is found at asparagine 68, asparagine 117, asparagine 150, asparagine 165, asparagine 195, asparagine 198, asparagine 210, asparagine 252, asparagine 255, asparagine 266, asparagine 276, asparagine 282, asparagine 294, asparagine 306, asparagine 316, asparagine 373, asparagine 414, asparagine 451, asparagine 488, and asparagine 491. Disulfide bonds link cysteine 101–cysteine 218, cysteine 108–cysteine 209, cysteine 113–cysteine 166, cysteine 231–cysteine 261, and cysteine 241–cysteine 253. Residues 113-165 (CVELNSTRERATTPTTTPKSTGLPCVGPTSGENLQSCNASIIEREMEDEPASN) form a V1 region. The segment at 166-209 (CTFAMAGYVRDQKKNYYSVVWNDAEIYCKNKTNSTSKECYMIHC) is V2. The tract at residues 311–343 (CRRPGNKTVLPVTIMAGLVFHSQKYNMKLRQAW) is V3. A disulfide bridge links cysteine 311 with cysteine 344. A disulfide bridge links cysteine 396 with cysteine 471. Residues 403-444 (CKMDWFLNYLNNKTWDAYHNFCSSKKKGHAPGPCVQRTYVAY) form a V4 region. Residues 487 to 494 (KNRTNVTL) form a V5 region. Residues 537 to 557 (VPFVLGFLGFLGAAGTAMGAA) are fusion peptide. Residues 600–616 (LNARVTALEKYLEDQAR) are immunosuppression. Asparagine 645 and asparagine 661 each carry an N-linked (GlcNAc...) asparagine; by host glycan. Residues 650–675 (EWERQIADLESNITGQLVKAREQEEK) are a coiled coil. Residues 682–703 (KLTSWSDFWSWFDFSKWLNILK) are MPER; binding to GalCer. A helical membrane pass occupies residues 706–726 (FLVIVGIIGLRLLYTVYGCIV). The Cytoplasmic portion of the chain corresponds to 727-865 (RVRQGYVPLS…VRQGLEEILN (139 aa)). A YXXL motif; contains endocytosis signal motif is present at residues 732 to 735 (YVPL). Residues 744 to 763 (VGKGRPDNADEPGEGGDNSR) are disordered.

As to quaternary structure, the mature envelope protein (Env) consists of a homotrimer of non-covalently associated gp120-gp41 heterodimers. The resulting complex protrudes from the virus surface as a spike. Interacts with host CD4 and CCR5. Gp120 also interacts with the C-type lectins CD209/DC-SIGN and CLEC4M/DC-SIGNR (collectively referred to as DC-SIGN(R)). In terms of assembly, the mature envelope protein (Env) consists of a homotrimer of non-covalently associated gp120-gp41 heterodimers. The resulting complex protrudes from the virus surface as a spike. In terms of processing, specific enzymatic cleavages in vivo yield mature proteins. Envelope glycoproteins are synthesized as an inactive precursor that is heavily N-glycosylated and processed likely by host cell furin in the Golgi to yield the mature SU and TM proteins. The cleavage site between SU and TM requires the minimal sequence [KR]-X-[KR]-R.

It is found in the virion membrane. The protein resides in the host cell membrane. Its subcellular location is the host endosome membrane. The surface protein gp120 (SU) attaches the virus to the host lymphoid cell by binding to the primary receptor CD4. This interaction induces a structural rearrangement creating a high affinity binding site for a chemokine coreceptor like CCR5. This peculiar 2 stage receptor-interaction strategy allows gp120 to maintain the highly conserved coreceptor-binding site in a cryptic conformation, protected from neutralizing antibodies. These changes are transmitted to the transmembrane protein gp41 and are thought to activate its fusogenic potential by unmasking its fusion peptide. Its function is as follows. Surface protein gp120 (SU) may target the virus to gut-associated lymphoid tissue (GALT) by binding host ITGA4/ITGB7 (alpha-4/beta-7 integrins), a complex that mediates T-cell migration to the GALT. Interaction between gp120 and ITGA4/ITGB7 would allow the virus to enter GALT early in the infection, infecting and killing most of GALT's resting CD4+ T-cells. This T-cell depletion is believed to be the major insult to the host immune system leading to AIDS. Functionally, the surface protein gp120 is a ligand for CD209/DC-SIGN and CLEC4M/DC-SIGNR, which are respectively found on dendritic cells (DCs), and on endothelial cells of liver sinusoids and lymph node sinuses. These interactions allow capture of viral particles at mucosal surfaces by these cells and subsequent transmission to permissive cells. DCs are professional antigen presenting cells, critical for host immunity by inducing specific immune responses against a broad variety of pathogens. They act as sentinels in various tissues where they take up antigen, process it, and present it to T-cells following migration to lymphoid organs. SIV subverts the migration properties of dendritic cells to gain access to CD4+ T-cells in lymph nodes. Virus transmission to permissive T-cells occurs either in trans (without DCs infection, through viral capture and transmission), or in cis (following DCs productive infection, through the usual CD4-gp120 interaction), thereby inducing a robust infection. In trans infection, bound virions remain infectious over days and it is proposed that they are not degraded, but protected in non-lysosomal acidic organelles within the DCs close to the cell membrane thus contributing to the viral infectious potential during DCs' migration from the periphery to the lymphoid tissues. On arrival at lymphoid tissues, intact virions recycle back to DCs' cell surface allowing virus transmission to CD4+ T-cells. Virion capture also seems to lead to MHC-II-restricted viral antigen presentation, and probably to the activation of SIV-specific CD4+ cells. In terms of biological role, the transmembrane protein gp41 (TM) acts as a class I viral fusion protein. Under the current model, the protein has at least 3 conformational states: pre-fusion native state, pre-hairpin intermediate state, and post-fusion hairpin state. During fusion of viral and target intracellular membranes, the coiled coil regions (heptad repeats) assume a trimer-of-hairpins structure, positioning the fusion peptide in close proximity to the C-terminal region of the ectodomain. The formation of this structure appears to drive apposition and subsequent fusion of viral and target cell membranes. Complete fusion occurs in host cell endosomes. The virus undergoes clathrin-dependent internalization long before endosomal fusion, thus minimizing the surface exposure of conserved viral epitopes during fusion and reducing the efficacy of inhibitors targeting these epitopes. Membranes fusion leads to delivery of the nucleocapsid into the cytoplasm. The envelope glycoprotein gp160 precursor down-modulates cell surface CD4 antigen by interacting with it in the endoplasmic reticulum and blocking its transport to the cell surface. Its function is as follows. The gp120-gp41 heterodimer allows rapid transcytosis of the virus through CD4 negative cells such as simple epithelial monolayers of the intestinal, rectal and endocervical epithelial barriers. Both gp120 and gp41 specifically recognize glycosphingolipids galactosyl-ceramide (GalCer) or 3' sulfo-galactosyl-ceramide (GalS) present in the lipid rafts structures of epithelial cells. Binding to these alternative receptors allows the rapid transcytosis of the virus through the epithelial cells. This transcytotic vesicle-mediated transport of virions from the apical side to the basolateral side of the epithelial cells does not involve infection of the cells themselves. In Simian immunodeficiency virus agm.vervet (isolate AGM TYO-1) (SIV-agm.ver), this protein is Envelope glycoprotein gp160 (env).